Here is a 682-residue protein sequence, read N- to C-terminus: PWWP domain-containing DNA repair factor 3A (682 aa).

Position 105 is a phosphoserine (Ser105). The interval 121–145 (EKTDADVASQVSSAPSPSLLGEDGQ) is disordered. A compositionally biased stretch (low complexity) spans 127 to 140 (VASQVSSAPSPSLL). Ser168 is modified (phosphoserine). Disordered regions lie at residues 179 to 318 (GPKT…GAAP) and 334 to 369 (GAGD…EEEP). Basic and acidic residues predominate over residues 203–220 (HGQESTTKKRQRNLGEKP). A phosphoserine mark is found at Ser345 and Ser346. A compositionally biased stretch (polar residues) spans 346-357 (SEESTGFKSTHS). A PWWP domain is found at 383 to 444 (VGMLVWLKYQ…KHFDCKEKHA (62 aa)).

This sequence belongs to the PWWP3A family. Interacts with TP53BP1 (via BRCT domain); the interaction is not dependent on its phosphorylation status. Binds nucleosomes. Interacts with trimethylated 'Lys-36' of histone H3 (H3K36me3) (in vitro).

It localises to the nucleus. Its function is as follows. Involved in the DNA damage response pathway by contributing to the maintenance of chromatin architecture. Recruited to the vicinity of DNA breaks by TP53BP1 and plays an accessory role to facilitate damage-induced chromatin changes and promoting chromatin relaxation. Required for efficient DNA repair and cell survival following DNA damage. The chain is PWWP domain-containing DNA repair factor 3A (Pwwp3a) from Mus musculus (Mouse).